The chain runs to 152 residues: Protein-export protein SecB (152 aa).

It belongs to the SecB family. As to quaternary structure, homotetramer, a dimer of dimers. One homotetramer interacts with 1 SecA dimer.

It localises to the cytoplasm. Its function is as follows. One of the proteins required for the normal export of preproteins out of the cell cytoplasm. It is a molecular chaperone that binds to a subset of precursor proteins, maintaining them in a translocation-competent state. It also specifically binds to its receptor SecA. The sequence is that of Protein-export protein SecB from Rickettsia akari (strain Hartford).